The chain runs to 276 residues: Rhomboid protease GlpG (276 aa).

The next 6 helical transmembrane spans lie at glycine 94–valine 114, alanine 142–glycine 162, leucine 169–glutamine 189, phenylalanine 192–tryptophan 212, leucine 229–isoleucine 249, and alanine 250–leucine 270. The Nucleophile role is filled by serine 201. The active site involves histidine 254.

It belongs to the peptidase S54 family.

Its subcellular location is the cell inner membrane. It carries out the reaction Cleaves type-1 transmembrane domains using a catalytic dyad composed of serine and histidine that are contributed by different transmembrane domains.. Its function is as follows. Rhomboid-type serine protease that catalyzes intramembrane proteolysis. In Enterobacter sp. (strain 638), this protein is Rhomboid protease GlpG.